Consider the following 157-residue polypeptide: MKGAKSKGAAKADAKLAVKSKGAEKPAKGRKGKAGKDPNKPKRAPSAFFVFMEEFRKEFKEKNPKNKSVAAVGKAAGDRWKSLSESDKAPYVAKANKLKLEYNKAIAAYNKGESTAAKKAPAKEEEEEDEEESDKSKSEVNDEDDEEGSEEDEDDDE.

3 disordered regions span residues 1–45 (MKGA…KRAP), 59–87 (FKEK…SESD), and 109–157 (YNKG…DDDE). Basic and acidic residues-rich tracts occupy residues 10 to 27 (AKAD…EKPA) and 76 to 87 (AGDRWKSLSESD). Positions 41 to 110 (PKRAPSAFFV…EYNKAIAAYN (70 aa)) form a DNA-binding region, HMG box. Composition is skewed to acidic residues over residues 124-133 (EEEEEDEEES) and 141-157 (NDED…DDDE). Ser149 bears the Phosphoserine; by CK2 mark.

In terms of tissue distribution, expressed in all tissues examined.

The protein localises to the nucleus. In terms of biological role, recognizes an AAGG motif at the MNF1-binding site. This is DNA-binding protein MNB1B (MNB1B) from Zea mays (Maize).